The following is a 163-amino-acid chain: 2-C-methyl-D-erythritol 2,4-cyclodiphosphate synthase (163 aa).

A divalent metal cation-binding residues include Asp-12 and His-14. Residues Asp-12–His-14 and His-38–Ser-39 each bind 4-CDP-2-C-methyl-D-erythritol 2-phosphate. An a divalent metal cation-binding site is contributed by His-46. Residues Asp-60–Gly-62, Phe-65–Asp-69, Thr-136–Glu-139, Phe-143, and Arg-146 contribute to the 4-CDP-2-C-methyl-D-erythritol 2-phosphate site.

This sequence belongs to the IspF family. As to quaternary structure, homotrimer. A divalent metal cation serves as cofactor.

It catalyses the reaction 4-CDP-2-C-methyl-D-erythritol 2-phosphate = 2-C-methyl-D-erythritol 2,4-cyclic diphosphate + CMP. It participates in isoprenoid biosynthesis; isopentenyl diphosphate biosynthesis via DXP pathway; isopentenyl diphosphate from 1-deoxy-D-xylulose 5-phosphate: step 4/6. Involved in the biosynthesis of isopentenyl diphosphate (IPP) and dimethylallyl diphosphate (DMAPP), two major building blocks of isoprenoid compounds. Catalyzes the conversion of 4-diphosphocytidyl-2-C-methyl-D-erythritol 2-phosphate (CDP-ME2P) to 2-C-methyl-D-erythritol 2,4-cyclodiphosphate (ME-CPP) with a corresponding release of cytidine 5-monophosphate (CMP). In Acinetobacter baylyi (strain ATCC 33305 / BD413 / ADP1), this protein is 2-C-methyl-D-erythritol 2,4-cyclodiphosphate synthase.